A 225-amino-acid chain; its full sequence is UPF0173 metal-dependent hydrolase Tneu_1348 (225 aa).

This sequence belongs to the UPF0173 family.

The chain is UPF0173 metal-dependent hydrolase Tneu_1348 from Pyrobaculum neutrophilum (strain DSM 2338 / JCM 9278 / NBRC 100436 / V24Sta) (Thermoproteus neutrophilus).